Consider the following 241-residue polypeptide: GTP cyclohydrolase 1 type 2 homolog (241 aa).

A divalent metal cation-binding residues include histidine 62, histidine 63, aspartate 101, histidine 207, and glutamate 211.

It belongs to the GTP cyclohydrolase I type 2/NIF3 family. As to quaternary structure, homohexamer.

The polypeptide is GTP cyclohydrolase 1 type 2 homolog (Campylobacter jejuni subsp. jejuni serotype O:2 (strain ATCC 700819 / NCTC 11168)).